Here is a 299-residue protein sequence, read N- to C-terminus: Bifunctional protein FolD 1 (299 aa).

NADP(+)-binding positions include 168–170 (GRS), serine 193, and isoleucine 234.

This sequence belongs to the tetrahydrofolate dehydrogenase/cyclohydrolase family. In terms of assembly, homodimer.

It catalyses the reaction (6R)-5,10-methylene-5,6,7,8-tetrahydrofolate + NADP(+) = (6R)-5,10-methenyltetrahydrofolate + NADPH. The catalysed reaction is (6R)-5,10-methenyltetrahydrofolate + H2O = (6R)-10-formyltetrahydrofolate + H(+). It participates in one-carbon metabolism; tetrahydrofolate interconversion. Its function is as follows. Catalyzes the oxidation of 5,10-methylenetetrahydrofolate to 5,10-methenyltetrahydrofolate and then the hydrolysis of 5,10-methenyltetrahydrofolate to 10-formyltetrahydrofolate. The polypeptide is Bifunctional protein FolD 1 (Mesorhizobium japonicum (strain LMG 29417 / CECT 9101 / MAFF 303099) (Mesorhizobium loti (strain MAFF 303099))).